The sequence spans 65 residues: Large ribosomal subunit protein bL33c (65 aa).

Belongs to the bacterial ribosomal protein bL33 family.

It localises to the plastid. Its subcellular location is the chloroplast. This chain is Large ribosomal subunit protein bL33c, found in Gracilaria tenuistipitata var. liui (Red alga).